A 355-amino-acid chain; its full sequence is BAG family molecular chaperone regulator 1 (355 aa).

The disordered stretch occupies residues 1–112 (MAGRSAARRP…KNVTGTQVEE (112 aa)). Basic and acidic residues predominate over residues 26 to 39 (PAREPRQSESRAER). Composition is skewed to polar residues over residues 80–91 (SSQSEKVGSSSR) and 102–111 (SKNVTGTQVE). Tandem repeats lie at residues 103–108 (KNVTGT), 111–116 (EEVTKI), 117–122 (EEATQT), 123–128 (EEVTVA), 129–134 (EEVTQT), 141–146 (EEMVQT), and 147–152 (EEMETP). The 7 X 6 AA tandem repeat of E-E-X(4) stretch occupies residues 111-209 (EEVTKIEEAT…LIFKGKSLKE (99 aa)). The disordered stretch occupies residues 132–151 (TQTDNMAKTEEMVQTEEMET). In terms of domain architecture, Ubiquitin-like spans 154–234 (LSVIVTHSNE…VMLIGEKSNP (81 aa)). The interval 182-229 (DLAQLVEEATGVPLPFQKLIFKGKSLKEMETPLSALGMQNGCRVMLIG) is interaction with HSPA8. The interaction with PPP1R15A stretch occupies residues 226 to 355 (MLIGEKSNPE…LQSTNLALAE (130 aa)). The BAG domain maps to 256 to 336 (HLQELNKELS…VFLAECDTVE (81 aa)).

In terms of assembly, homodimer. Forms a heteromeric complex with HSP70/HSC70. Binds to the ATPase domain of HSP/HSC70 chaperones. Interacts with NR3C1. Interacts with the N-terminal region of MAPRE2. Interacts with PPP1R15A. Interacts with BCL2 in an ATP-dependent manner. Interacts with SIAH1, HSPA8 (via NBD), HSPA1A (via NBD) and HSPA1B (via NBD). Interacts with SIAH2. Interacts with ESR1; the interaction is promoted in the absence of estradiol (17-beta-estradiol/E2). Ubiquitinated; mediated by SIAH1 or SIAH2 and leading to its subsequent proteasomal degradation. Isoform 2 is expressed in the heart, lung, kidney and spinal cord. Isoform 1 and isoform 2 are expressed in hematopoietic cell lines. The levels of isoform 2 are relatively constant in all the cell lines examined while the levels of isoform 1 are more variable (at protein level). Isoform 1 is expressed in the lung and kidney. Isoform 2 is expressed in various tissues, with highest levels in testis and stomach.

The protein resides in the nucleus. It localises to the cytoplasm. Co-chaperone for HSP70 and HSC70 chaperone proteins. Acts as a nucleotide-exchange factor (NEF) promoting the release of ADP from the HSP70 and HSC70 proteins thereby triggering client/substrate protein release. Nucleotide release is mediated via its binding to the nucleotide-binding domain (NBD) of HSPA8/HSC70 where as the substrate release is mediated via its binding to the substrate-binding domain (SBD) of HSPA8/HSC70. Inhibits the pro-apoptotic function of PPP1R15A, and has anti-apoptotic activity. Markedly increases the anti-cell death function of BCL2 induced by various stimuli. Involved in the STUB1-mediated proteasomal degradation of ESR1 in response to age-related circulating estradiol (17-beta-estradiol/E2) decline, thereby promotes neuronal apoptosis in response to ischemic reperfusion injury. This is BAG family molecular chaperone regulator 1 (Bag1) from Mus musculus (Mouse).